The chain runs to 222 residues: RNA chaperone ProQ (222 aa).

Positions 94–113 (EHADHAKQQLDESKAKAAEK) are enriched in basic and acidic residues. Residues 94-171 (EHADHAKQQL…PAKLTDSDLQ (78 aa)) form a disordered region. Residues 114-131 (RKAKLAQQPKRKDKRQFN) show a composition bias toward basic residues. Residues 133-148 (PKGEKSANSDHADTKR) are compositionally biased toward basic and acidic residues. Over residues 155–164 (NRPNTTPPAK) the composition is skewed to low complexity.

It belongs to the ProQ family.

The protein localises to the cytoplasm. In terms of biological role, RNA chaperone with significant RNA binding, RNA strand exchange and RNA duplexing activities. The chain is RNA chaperone ProQ from Alteromonas mediterranea (strain DSM 17117 / CIP 110805 / LMG 28347 / Deep ecotype).